The sequence spans 445 residues: Proton extrusion protein PxcA (445 aa).

The next 4 helical transmembrane spans lie at 227–247 (FILL…TFLI), 322–342 (AIAN…VVAF), 369–389 (LIIL…WEVI), and 405–425 (FNFL…KYWI).

Belongs to the CemA family.

The protein localises to the cell inner membrane. In terms of biological role, required for H(+) efflux immediately after light irradiation to form a rapid H(+) concentration gradient across the thylakoid membranes. Together with PxcL, contributes to transient H(+) uptake following dark to light transition. The protein is Proton extrusion protein PxcA of Microcystis aeruginosa (strain NIES-843 / IAM M-2473).